The primary structure comprises 485 residues: Arginine biosynthesis bifunctional protein ArgJ, mitochondrial (485 aa).

Positions 185, 214, 225, and 315 each coordinate substrate. Catalysis depends on T225, which acts as the Nucleophile.

This sequence belongs to the ArgJ family. Heterodimer of an alpha and a beta chain. The alpha and beta chains are autoproteolytically processed from a single precursor protein within the mitochondrion.

The protein localises to the mitochondrion matrix. It carries out the reaction N(2)-acetyl-L-ornithine + L-glutamate = N-acetyl-L-glutamate + L-ornithine. It catalyses the reaction L-glutamate + acetyl-CoA = N-acetyl-L-glutamate + CoA + H(+). It functions in the pathway amino-acid biosynthesis; L-arginine biosynthesis; L-ornithine and N-acetyl-L-glutamate from L-glutamate and N(2)-acetyl-L-ornithine (cyclic): step 1/1. The protein operates within amino-acid biosynthesis; L-arginine biosynthesis; N(2)-acetyl-L-ornithine from L-glutamate: step 1/4. Catalyzes two activities which are involved in the cyclic version of arginine biosynthesis: the synthesis of acetylglutamate from glutamate and acetyl-CoA, and of ornithine by transacetylation between acetylornithine and glutamate. This Penicillium rubens (strain ATCC 28089 / DSM 1075 / NRRL 1951 / Wisconsin 54-1255) (Penicillium chrysogenum) protein is Arginine biosynthesis bifunctional protein ArgJ, mitochondrial.